A 1390-amino-acid polypeptide reads, in one-letter code: DNA-directed RNA polymerase subunit beta (1390 aa).

The protein belongs to the RNA polymerase beta chain family. The RNAP catalytic core consists of 2 alpha, 1 beta, 1 beta' and 1 omega subunit. When a sigma factor is associated with the core the holoenzyme is formed, which can initiate transcription.

The catalysed reaction is RNA(n) + a ribonucleoside 5'-triphosphate = RNA(n+1) + diphosphate. DNA-dependent RNA polymerase catalyzes the transcription of DNA into RNA using the four ribonucleoside triphosphates as substrates. The sequence is that of DNA-directed RNA polymerase subunit beta from Chromobacterium violaceum (strain ATCC 12472 / DSM 30191 / JCM 1249 / CCUG 213 / NBRC 12614 / NCIMB 9131 / NCTC 9757 / MK).